A 559-amino-acid polypeptide reads, in one-letter code: Forkhead box protein O6 (559 aa).

Disordered regions lie at residues 1 to 77 (MAAK…VGPL) and 163 to 183 (SWWM…RRAV). A DNA-binding region (fork-head) is located at residues 88–182 (WGNLSYADLI…KTGKTPRRRA (95 aa)). Residue Ser-184 is modified to Phosphoserine. Disordered stretches follow at residues 197–232 (KASK…KWAA) and 534–559 (NFDS…WVPG). 2 stretches are compositionally biased toward pro residues: residues 213–222 (DSPPGAPVPG) and 539–553 (LPPP…PPPN).

Phosphorylation of Ser-184 is be important in regulating the transacriptional activity. Expressed in brain in areas of the nucleus accumbens, cingulate cortex, parts of the amygdala and in the hippocampus.

The protein resides in the cytoplasm. It localises to the nucleus. Transcriptional activator. The chain is Forkhead box protein O6 (Foxo6) from Mus musculus (Mouse).